The primary structure comprises 259 residues: UPF0246 protein SG0407 (259 aa).

This sequence belongs to the UPF0246 family.

The polypeptide is UPF0246 protein SG0407 (Sodalis glossinidius (strain morsitans)).